The sequence spans 237 residues: Ribosomal RNA small subunit methyltransferase G (237 aa).

S-adenosyl-L-methionine-binding positions include G78, F83, 129–130, and R148; that span reads AE.

The protein belongs to the methyltransferase superfamily. RNA methyltransferase RsmG family.

The protein resides in the cytoplasm. Specifically methylates the N7 position of a guanine in 16S rRNA. In Streptococcus equi subsp. equi (strain 4047), this protein is Ribosomal RNA small subunit methyltransferase G.